A 179-amino-acid chain; its full sequence is Large ribosomal subunit protein uL5 (179 aa).

Belongs to the universal ribosomal protein uL5 family. As to quaternary structure, part of the 50S ribosomal subunit; part of the 5S rRNA/L5/L18/L25 subcomplex. Contacts the 5S rRNA and the P site tRNA. Forms a bridge to the 30S subunit in the 70S ribosome.

In terms of biological role, this is one of the proteins that bind and probably mediate the attachment of the 5S RNA into the large ribosomal subunit, where it forms part of the central protuberance. In the 70S ribosome it contacts protein S13 of the 30S subunit (bridge B1b), connecting the 2 subunits; this bridge is implicated in subunit movement. Contacts the P site tRNA; the 5S rRNA and some of its associated proteins might help stabilize positioning of ribosome-bound tRNAs. The sequence is that of Large ribosomal subunit protein uL5 from Rickettsia akari (strain Hartford).